The sequence spans 556 residues: DNA ligase B (556 aa).

K122 serves as the catalytic N6-AMP-lysine intermediate.

The protein belongs to the NAD-dependent DNA ligase family. LigB subfamily.

It carries out the reaction NAD(+) + (deoxyribonucleotide)n-3'-hydroxyl + 5'-phospho-(deoxyribonucleotide)m = (deoxyribonucleotide)n+m + AMP + beta-nicotinamide D-nucleotide.. Catalyzes the formation of phosphodiester linkages between 5'-phosphoryl and 3'-hydroxyl groups in double-stranded DNA using NAD as a coenzyme and as the energy source for the reaction. In Enterobacter sp. (strain 638), this protein is DNA ligase B.